Here is a 333-residue protein sequence, read N- to C-terminus: DNA-directed RNA polymerase subunit alpha (333 aa).

Residues 1–227 (MRKIKVAPFM…VMNKQLSVFN (227 aa)) are alpha N-terminal domain (alpha-NTD). The segment at 247-333 (ELKPFLAAVD…LVKKLEQLKA (87 aa)) is alpha C-terminal domain (alpha-CTD).

Belongs to the RNA polymerase alpha chain family. Homodimer. The RNAP catalytic core consists of 2 alpha, 1 beta, 1 beta' and 1 omega subunit. When a sigma factor is associated with the core the holoenzyme is formed, which can initiate transcription.

It catalyses the reaction RNA(n) + a ribonucleoside 5'-triphosphate = RNA(n+1) + diphosphate. In terms of biological role, DNA-dependent RNA polymerase catalyzes the transcription of DNA into RNA using the four ribonucleoside triphosphates as substrates. The sequence is that of DNA-directed RNA polymerase subunit alpha from Sulfurovum sp. (strain NBC37-1).